A 159-amino-acid polypeptide reads, in one-letter code: Lipoprotein signal peptidase (159 aa).

3 helical membrane passes run 4–24 (PYFVSITLFITIAVLILDQVT), 64–84 (MSFFFIVTIVVLGLLVFFYIK), and 88–108 (GNFLMQVAISLLFAGALGNFI). Residues Asp-118 and Asp-136 contribute to the active site. A helical membrane pass occupies residues 131–151 (IFNGADSSLTIGVILVLIALL).

Belongs to the peptidase A8 family.

The protein resides in the cell membrane. The catalysed reaction is Release of signal peptides from bacterial membrane prolipoproteins. Hydrolyzes -Xaa-Yaa-Zaa-|-(S,diacylglyceryl)Cys-, in which Xaa is hydrophobic (preferably Leu), and Yaa (Ala or Ser) and Zaa (Gly or Ala) have small, neutral side chains.. The protein operates within protein modification; lipoprotein biosynthesis (signal peptide cleavage). Its function is as follows. This protein specifically catalyzes the removal of signal peptides from prolipoproteins. This chain is Lipoprotein signal peptidase, found in Staphylococcus carnosus (strain TM300).